We begin with the raw amino-acid sequence, 827 residues long: Beta-galactosidase 1 (827 aa).

Positions 1-25 are cleaved as a signal peptide; sequence MMGRRGSSWCRWWVALLVLAVAADA. Catalysis depends on Glu187, which acts as the Proton donor. N-linked (GlcNAc...) asparagine glycans are attached at residues Asn198 and Asn249. The active-site Nucleophile is Glu259. N-linked (GlcNAc...) asparagine glycosylation is found at Asn260, Asn366, Asn392, Asn502, Asn520, Asn578, Asn586, and Asn615. The SUEL-type lectin domain occupies 746–827; it reads GEAGDAVTLS…SGVLTVQATC (82 aa).

The protein belongs to the glycosyl hydrolase 35 family.

Its subcellular location is the secreted. It localises to the extracellular space. It is found in the apoplast. The enzyme catalyses Hydrolysis of terminal non-reducing beta-D-galactose residues in beta-D-galactosides.. The chain is Beta-galactosidase 1 from Oryza sativa subsp. japonica (Rice).